The chain runs to 368 residues: Anhydro-N-acetylmuramic acid kinase (368 aa).

ATP is bound at residue 13–20 (GTSLDGVD).

Belongs to the anhydro-N-acetylmuramic acid kinase family.

It carries out the reaction 1,6-anhydro-N-acetyl-beta-muramate + ATP + H2O = N-acetyl-D-muramate 6-phosphate + ADP + H(+). It participates in amino-sugar metabolism; 1,6-anhydro-N-acetylmuramate degradation. The protein operates within cell wall biogenesis; peptidoglycan recycling. Catalyzes the specific phosphorylation of 1,6-anhydro-N-acetylmuramic acid (anhMurNAc) with the simultaneous cleavage of the 1,6-anhydro ring, generating MurNAc-6-P. Is required for the utilization of anhMurNAc either imported from the medium or derived from its own cell wall murein, and thus plays a role in cell wall recycling. This Hahella chejuensis (strain KCTC 2396) protein is Anhydro-N-acetylmuramic acid kinase.